We begin with the raw amino-acid sequence, 617 residues long: Pyrophosphate--fructose 6-phosphate 1-phosphotransferase subunit alpha 2 (617 aa).

It belongs to the phosphofructokinase type A (PFKA) family. PPi-dependent PFK group II subfamily. Clade 'Long' sub-subfamily. Tetramer of two alpha (regulatory) and two beta (catalytic) chains. Expressed in roots and specific parts such as the trichomes of leaves, cotyledon veins, as well as in stamen and gynoecium of flowers.

It is found in the cytoplasm. It functions in the pathway carbohydrate degradation; glycolysis; D-glyceraldehyde 3-phosphate and glycerone phosphate from D-glucose: step 3/4. With respect to regulation, allosterically activated by fructose 2,6-bisphosphate. Regulatory subunit of pyrophosphate--fructose 6-phosphate 1-phosphotransferase. The polypeptide is Pyrophosphate--fructose 6-phosphate 1-phosphotransferase subunit alpha 2 (Arabidopsis thaliana (Mouse-ear cress)).